Reading from the N-terminus, the 367-residue chain is Epoxide hydrolase 3 (367 aa).

Residues 21-41 (GVFFWVLVYVAALLAAVSYIP) form a helical membrane-spanning segment. The active-site Nucleophile is Asp-173. Tyr-285 functions as the Proton donor in the catalytic mechanism. His-340 serves as the catalytic Proton acceptor.

This sequence belongs to the AB hydrolase superfamily. Epoxide hydrolase family.

The protein localises to the microsome membrane. It carries out the reaction an epoxide + H2O = an ethanediol. It catalyses the reaction 9,10-epoxyoctadecanoate + H2O = 9,10-dihydroxyoctadecanoate. The enzyme catalyses 9,10-epoxy-(12Z)-octadecenoate + H2O = 9,10-dihydroxy-(12Z)-octadecenoate. The catalysed reaction is 8,9-epoxy-(5Z,11Z,14Z)-eicosatrienoate + H2O = 8,9-dihydroxy-(5Z,11Z,14Z)-eicosatrienoate. It carries out the reaction 11,12-epoxy-(5Z,8Z,14Z)-eicosatrienoate + H2O = 11,12-dihydroxy-(5Z,8Z,14Z)-eicosatrienoate. It catalyses the reaction 14,15-epoxy-(5Z,8Z,11Z)-eicosatrienoate + H2O = 14,15-dihydroxy-(5Z,8Z,11Z)-eicosatrienoate. With respect to regulation, inhibited by 1-(1-acetylpiperidin-4-yl)-3-(4-(trifl uoromethoxy)phenyl)urea (TPAU), 1-cyclohexyl-3-dodecylurea (CDU), 12-(3-adamantan-1-yl-ureido)-dodecanoic acid (AUDA), 1-((3S, 5S, 7S)-adamantan-1-yl)-3-(5-(2-(2-ethoxyethoxy) ethoxy)pentyl)urea (AEPU) and to a lesser extent by 8-(3-((3S, 5S, 7S)-adamantan-1-yl)ureido) octanoic acid (AUOA). Catalyzes the hydrolysis of epoxide-containing fatty acids. Active in vitro against epoxyeicosatrienoic acids (EETs) including 8,9-EET, 9,10-EET, 11,12-EET and 14,15-EET and leukotoxin. This chain is Epoxide hydrolase 3 (ephx3), found in Xenopus tropicalis (Western clawed frog).